A 101-amino-acid polypeptide reads, in one-letter code: Small ribosomal subunit protein uS14 (101 aa).

It belongs to the universal ribosomal protein uS14 family. As to quaternary structure, part of the 30S ribosomal subunit. Contacts proteins S3 and S10.

In terms of biological role, binds 16S rRNA, required for the assembly of 30S particles and may also be responsible for determining the conformation of the 16S rRNA at the A site. This chain is Small ribosomal subunit protein uS14, found in Shewanella halifaxensis (strain HAW-EB4).